We begin with the raw amino-acid sequence, 489 residues long: N-succinylglutamate 5-semialdehyde dehydrogenase (489 aa).

NAD(+) is bound at residue glycine 223 to glycine 228. Catalysis depends on residues glutamate 246 and cysteine 280.

Belongs to the aldehyde dehydrogenase family. AstD subfamily.

The enzyme catalyses N-succinyl-L-glutamate 5-semialdehyde + NAD(+) + H2O = N-succinyl-L-glutamate + NADH + 2 H(+). It participates in amino-acid degradation; L-arginine degradation via AST pathway; L-glutamate and succinate from L-arginine: step 4/5. Its function is as follows. Catalyzes the NAD-dependent reduction of succinylglutamate semialdehyde into succinylglutamate. The protein is N-succinylglutamate 5-semialdehyde dehydrogenase of Idiomarina loihiensis (strain ATCC BAA-735 / DSM 15497 / L2-TR).